We begin with the raw amino-acid sequence, 259 residues long: MLMVISPAKTLDFETPPTTARFTRPQYLDHSQELITQLRELTPAQISELMHLSDKLAGLNAARFGSWDPAFTLDNAKQALLAFKGDVYTGLQAETLSDAQLDYAQDHLRMLSGLYGLLRPLDLMQPYRLEMGTRLANARGKDLYAFWGTRISEWLNEALADQGDDLLLNLASTEYFSAVKRSALKARIIDTEFKDLKNGHYKIISFYAKKARGMMSRFVIEERINSPEALKQFDVQGYRYNSEQSTPDKLVFLRNSAED.

It belongs to the UPF0246 family.

In Pseudomonas syringae pv. tomato (strain ATCC BAA-871 / DC3000), this protein is UPF0246 protein PSPTO_1244.